The primary structure comprises 327 residues: 7,8-didemethyl-8-hydroxy-5-deazariboflavin synthase (327 aa).

One can recognise a Radical SAM core domain in the interval 6–244 (ITFSRNVFLP…EEVAVQVAPN (239 aa)). Residues cysteine 20, cysteine 24, and cysteine 27 each contribute to the [4Fe-4S] cluster site.

Belongs to the radical SAM superfamily. CofG family. In terms of assembly, consists of two subunits, CofG and CofH. Requires [4Fe-4S] cluster as cofactor.

The catalysed reaction is 5-amino-5-(4-hydroxybenzyl)-6-(D-ribitylimino)-5,6-dihydrouracil + S-adenosyl-L-methionine = 7,8-didemethyl-8-hydroxy-5-deazariboflavin + 5'-deoxyadenosine + L-methionine + NH4(+) + H(+). Its pathway is cofactor biosynthesis; coenzyme F0 biosynthesis. Functionally, catalyzes the radical-mediated synthesis of 7,8-didemethyl-8-hydroxy-5-deazariboflavin from 5-amino-5-(4-hydroxybenzyl)-6-(D-ribitylimino)-5,6-dihydrouracil. This is 7,8-didemethyl-8-hydroxy-5-deazariboflavin synthase from Methanosphaerula palustris (strain ATCC BAA-1556 / DSM 19958 / E1-9c).